The following is a 230-amino-acid chain: Lecithin retinol acyltransferase (230 aa).

The Cytoplasmic portion of the chain corresponds to 1-194 (MKNPMLEVVS…VKIIIRDQRS (194 aa)). Residues 50–177 (VLEVPRTHLT…CRYGTPISPQ (128 aa)) form the LRAT domain. Catalysis depends on residues His-60 and His-72. Cys-161 serves as the catalytic Acyl-thioester intermediate. A helical membrane pass occupies residues 195–215 (VLASAVLGLASIVCTGLVSYT). Residues 216 to 230 (TLPAIFIPFFLWMAG) are Lumenal-facing.

It belongs to the H-rev107 family. As to expression, hepatic stellate cells and endothelial cells (at protein level). Found at high levels in testis and liver, followed by retinal pigment epithelium, small intestine, prostate, pancreas and colon. Low expression observed in brain. In fetal tissues, expressed in retinal pigment epithelium and liver, and barely in the brain.

It is found in the endoplasmic reticulum membrane. Its subcellular location is the rough endoplasmic reticulum. The protein localises to the endosome. The protein resides in the multivesicular body. It localises to the cytoplasm. It is found in the perinuclear region. It catalyses the reaction all-trans-retinol--[retinol-binding protein] + a 1,2-diacyl-sn-glycero-3-phosphocholine = apo--[retinol-binding protein] + an all-trans-retinyl ester + a 2-acyl-sn-glycero-3-phosphocholine. The enzyme catalyses 1,2-dihexadecanoyl-sn-glycero-3-phosphocholine + all-trans-retinol = all-trans-retinyl hexadecanoate + 2-hexadecanoyl-sn-glycero-3-phosphocholine. It carries out the reaction 1,2-diheptanoyl-sn-glycero-3-phosphocholine + all-trans-retinol--[retinol-binding protein] = all-trans-retinyl heptanoate + 2-heptanoyl-sn-glycero-3-phosphocholine + apo--[retinol-binding protein]. The catalysed reaction is 1,2-dioctanoyl-sn-glycero-3-phosphocholine + all-trans-retinol--[retinol-binding protein] = 2-octanoyl-sn-glycero-3-phosphocholine + all-trans-retinyl octanoate + apo--[retinol-binding protein]. It catalyses the reaction all-trans-retinol--[retinol-binding protein] + 1,2-dihexadecanoyl-sn-glycero-3-phosphocholine = apo--[retinol-binding protein] + all-trans-retinyl hexadecanoate + 2-hexadecanoyl-sn-glycero-3-phosphocholine. The enzyme catalyses 1,2-didodecanoyl-sn-glycero-3-phosphocholine + all-trans-retinol--[retinol-binding protein] = 2-dodecanoyl-sn-glycero-3-phosphocholine + all-trans-retinyl dodecanoate + apo--[retinol-binding protein]. It functions in the pathway cofactor metabolism; retinol metabolism. Inhibited by all-trans-retinyl alpha-bromoacetate and N-boc-L-biocytinyl-11-aminoundecane chloro-methyl ketone (BACMK). Functionally, transfers the acyl group from the sn-1 position of phosphatidylcholine to all-trans retinol, producing all-trans retinyl esters. Retinyl esters are storage forms of vitamin A. LRAT plays a critical role in vision. It provides the all-trans retinyl ester substrates for the isomerohydrolase which processes the esters into 11-cis-retinol in the retinal pigment epithelium; due to a membrane-associated alcohol dehydrogenase, 11 cis-retinol is oxidized and converted into 11-cis-retinaldehyde which is the chromophore for rhodopsin and the cone photopigments. Required for the survival of cone photoreceptors and correct rod photoreceptor cell morphology. This is Lecithin retinol acyltransferase from Homo sapiens (Human).